A 546-amino-acid polypeptide reads, in one-letter code: Probable protein kinase UbiB (546 aa).

Residues 124–502 (DFSVEPLASA…HVRQGQSRYL (379 aa)) form the Protein kinase domain. ATP is bound by residues 130–138 (LASASIAQV) and K153. D288 functions as the Proton acceptor in the catalytic mechanism. Helical transmembrane passes span 501–521 (YLFGIGAVLLLSGTLLFIHRP) and 522–542 (EWGMMPGWLMAGGVVTWLIGW).

The protein belongs to the ABC1 family. UbiB subfamily.

The protein localises to the cell inner membrane. It participates in cofactor biosynthesis; ubiquinone biosynthesis [regulation]. Is probably a protein kinase regulator of UbiI activity which is involved in aerobic coenzyme Q (ubiquinone) biosynthesis. The chain is Probable protein kinase UbiB from Klebsiella pneumoniae (strain 342).